Consider the following 278-residue polypeptide: UPF0761 membrane protein CBU_1578 (278 aa).

Transmembrane regions (helical) follow at residues Leu38–Phe58, Leu68–Leu88, Val92–Tyr112, Phe134–Leu154, Leu177–Leu197, Ala207–Val227, and Val244–Val264.

It belongs to the UPF0761 family.

Its subcellular location is the cell inner membrane. The sequence is that of UPF0761 membrane protein CBU_1578 from Coxiella burnetii (strain RSA 493 / Nine Mile phase I).